Consider the following 228-residue polypeptide: L-ribulose-5-phosphate 4-epimerase UlaF (228 aa).

Substrate contacts are provided by residues 26–27 (GN), 43–44 (SG), and 72–73 (SS). 3 residues coordinate Zn(2+): Asp74, His93, and His95. Asp118 acts as the Proton donor/acceptor in catalysis. A Zn(2+)-binding site is contributed by His167. Tyr225 functions as the Proton donor/acceptor in the catalytic mechanism.

The protein belongs to the aldolase class II family. AraD/FucA subfamily. The cofactor is Zn(2+).

The enzyme catalyses L-ribulose 5-phosphate = D-xylulose 5-phosphate. Its pathway is cofactor degradation; L-ascorbate degradation; D-xylulose 5-phosphate from L-ascorbate: step 4/4. Its function is as follows. Catalyzes the isomerization of L-ribulose 5-phosphate to D-xylulose 5-phosphate. Is involved in the anaerobic L-ascorbate utilization. The sequence is that of L-ribulose-5-phosphate 4-epimerase UlaF from Escherichia coli (strain SE11).